Consider the following 339-residue polypeptide: Holliday junction branch migration complex subunit RuvB (339 aa).

Residues 1–180 (MTRTITPDMT…FGVISRLEFY (180 aa)) are large ATPase domain (RuvB-L). ATP is bound by residues Leu-19, Arg-20, Gly-61, Lys-64, Thr-65, Thr-66, 127 to 129 (EDF), Arg-170, Tyr-180, and Arg-217. Thr-65 contributes to the Mg(2+) binding site. Residues 181 to 251 (TIEELAFIIT…VVQDALALLE (71 aa)) form a small ATPAse domain (RuvB-S) region. The interval 254 to 339 (HMGFDYMDRM…EPPQGKLFQD (86 aa)) is head domain (RuvB-H). 2 residues coordinate DNA: Arg-309 and Arg-314.

It belongs to the RuvB family. As to quaternary structure, homohexamer. Forms an RuvA(8)-RuvB(12)-Holliday junction (HJ) complex. HJ DNA is sandwiched between 2 RuvA tetramers; dsDNA enters through RuvA and exits via RuvB. An RuvB hexamer assembles on each DNA strand where it exits the tetramer. Each RuvB hexamer is contacted by two RuvA subunits (via domain III) on 2 adjacent RuvB subunits; this complex drives branch migration. In the full resolvosome a probable DNA-RuvA(4)-RuvB(12)-RuvC(2) complex forms which resolves the HJ.

It localises to the cytoplasm. The catalysed reaction is ATP + H2O = ADP + phosphate + H(+). The RuvA-RuvB-RuvC complex processes Holliday junction (HJ) DNA during genetic recombination and DNA repair, while the RuvA-RuvB complex plays an important role in the rescue of blocked DNA replication forks via replication fork reversal (RFR). RuvA specifically binds to HJ cruciform DNA, conferring on it an open structure. The RuvB hexamer acts as an ATP-dependent pump, pulling dsDNA into and through the RuvAB complex. RuvB forms 2 homohexamers on either side of HJ DNA bound by 1 or 2 RuvA tetramers; 4 subunits per hexamer contact DNA at a time. Coordinated motions by a converter formed by DNA-disengaged RuvB subunits stimulates ATP hydrolysis and nucleotide exchange. Immobilization of the converter enables RuvB to convert the ATP-contained energy into a lever motion, pulling 2 nucleotides of DNA out of the RuvA tetramer per ATP hydrolyzed, thus driving DNA branch migration. The RuvB motors rotate together with the DNA substrate, which together with the progressing nucleotide cycle form the mechanistic basis for DNA recombination by continuous HJ branch migration. Branch migration allows RuvC to scan DNA until it finds its consensus sequence, where it cleaves and resolves cruciform DNA. This is Holliday junction branch migration complex subunit RuvB from Geotalea daltonii (strain DSM 22248 / JCM 15807 / FRC-32) (Geobacter daltonii).